A 469-amino-acid chain; its full sequence is Asparagine--tRNA ligase (469 aa).

This sequence belongs to the class-II aminoacyl-tRNA synthetase family. As to quaternary structure, homodimer.

Its subcellular location is the cytoplasm. The enzyme catalyses tRNA(Asn) + L-asparagine + ATP = L-asparaginyl-tRNA(Asn) + AMP + diphosphate + H(+). This Porphyromonas gingivalis (strain ATCC 33277 / DSM 20709 / CIP 103683 / JCM 12257 / NCTC 11834 / 2561) protein is Asparagine--tRNA ligase.